The following is a 196-amino-acid chain: Holliday junction resolvase RecU (196 aa).

The Mg(2+) site is built by Thr82, Asp84, Glu97, and Gln116.

It belongs to the RecU family. Requires Mg(2+) as cofactor.

It is found in the cytoplasm. It catalyses the reaction Endonucleolytic cleavage at a junction such as a reciprocal single-stranded crossover between two homologous DNA duplexes (Holliday junction).. In terms of biological role, endonuclease that resolves Holliday junction intermediates in genetic recombination. Cleaves mobile four-strand junctions by introducing symmetrical nicks in paired strands. Promotes annealing of linear ssDNA with homologous dsDNA. Required for DNA repair, homologous recombination and chromosome segregation. The polypeptide is Holliday junction resolvase RecU (Oceanobacillus iheyensis (strain DSM 14371 / CIP 107618 / JCM 11309 / KCTC 3954 / HTE831)).